Reading from the N-terminus, the 365-residue chain is Chorismate synthase (365 aa).

Arg47 is a binding site for NADP(+). FMN-binding positions include 124–126 (RAS), Gly287, 302–306 (KPTAT), and Arg328. A disordered region spans residues 266 to 290 (FIKSDDSSKLRTTSNNSGGIQGGIS).

Belongs to the chorismate synthase family. In terms of assembly, homotetramer. FMNH2 serves as cofactor.

It catalyses the reaction 5-O-(1-carboxyvinyl)-3-phosphoshikimate = chorismate + phosphate. Its pathway is metabolic intermediate biosynthesis; chorismate biosynthesis; chorismate from D-erythrose 4-phosphate and phosphoenolpyruvate: step 7/7. Catalyzes the anti-1,4-elimination of the C-3 phosphate and the C-6 proR hydrogen from 5-enolpyruvylshikimate-3-phosphate (EPSP) to yield chorismate, which is the branch point compound that serves as the starting substrate for the three terminal pathways of aromatic amino acid biosynthesis. This reaction introduces a second double bond into the aromatic ring system. This chain is Chorismate synthase, found in Prochlorococcus marinus (strain MIT 9301).